Reading from the N-terminus, the 401-residue chain is Tryptophan synthase beta chain (401 aa).

N6-(pyridoxal phosphate)lysine is present on lysine 92.

The protein belongs to the TrpB family. In terms of assembly, tetramer of two alpha and two beta chains. The cofactor is pyridoxal 5'-phosphate.

It catalyses the reaction (1S,2R)-1-C-(indol-3-yl)glycerol 3-phosphate + L-serine = D-glyceraldehyde 3-phosphate + L-tryptophan + H2O. Its pathway is amino-acid biosynthesis; L-tryptophan biosynthesis; L-tryptophan from chorismate: step 5/5. In terms of biological role, the beta subunit is responsible for the synthesis of L-tryptophan from indole and L-serine. In Ruthia magnifica subsp. Calyptogena magnifica, this protein is Tryptophan synthase beta chain.